Consider the following 406-residue polypeptide: Phosphopentomutase (406 aa).

Residues D10, D305, H310, D346, H347, and H358 each contribute to the Mn(2+) site.

This sequence belongs to the phosphopentomutase family. Requires Mn(2+) as cofactor.

Its subcellular location is the cytoplasm. It catalyses the reaction 2-deoxy-alpha-D-ribose 1-phosphate = 2-deoxy-D-ribose 5-phosphate. It carries out the reaction alpha-D-ribose 1-phosphate = D-ribose 5-phosphate. It functions in the pathway carbohydrate degradation; 2-deoxy-D-ribose 1-phosphate degradation; D-glyceraldehyde 3-phosphate and acetaldehyde from 2-deoxy-alpha-D-ribose 1-phosphate: step 1/2. Functionally, isomerase that catalyzes the conversion of deoxy-ribose 1-phosphate (dRib-1-P) and ribose 1-phosphate (Rib-1-P) to deoxy-ribose 5-phosphate (dRib-5-P) and ribose 5-phosphate (Rib-5-P), respectively. The protein is Phosphopentomutase of Rhizobium rhizogenes (strain K84 / ATCC BAA-868) (Agrobacterium radiobacter).